Consider the following 204-residue polypeptide: Wound-induced proteinase inhibitor 2 (204 aa).

Positions 1–25 (MAVPKEVSFLASLLVLGILLLHVDA) are cleaved as a signal peptide. 3 tandem repeats follow at residues 25–67 (AKAC…DPNN), 68–125 (PKPC…DPNN), and 126–183 (PKPC…DPNH). Intrachain disulfides connect Cys-28/Cys-100, Cys-38/Cys-75, Cys-41/Cys-59, Cys-42/Cys-71, Cys-48/Cys-84, and Cys-99/Cys-117. The 4; truncated repeat unit spans residues 184-204 (PKACPKNCDPNIAYSLCLYEK).

It belongs to the protease inhibitor I20 (potato type II proteinase inhibitor) family.

The chain is Wound-induced proteinase inhibitor 2 (PIN2) from Capsicum annuum (Capsicum pepper).